Consider the following 208-residue polypeptide: Uracil phosphoribosyltransferase (208 aa).

5-phospho-alpha-D-ribose 1-diphosphate is bound by residues R78, R103, and 130–138 (DPMLATGGS). Uracil-binding positions include I193 and 198-200 (GDA). D199 provides a ligand contact to 5-phospho-alpha-D-ribose 1-diphosphate.

This sequence belongs to the UPRTase family. Mg(2+) is required as a cofactor.

The enzyme catalyses UMP + diphosphate = 5-phospho-alpha-D-ribose 1-diphosphate + uracil. It functions in the pathway pyrimidine metabolism; UMP biosynthesis via salvage pathway; UMP from uracil: step 1/1. Its activity is regulated as follows. Allosterically activated by GTP. Functionally, catalyzes the conversion of uracil and 5-phospho-alpha-D-ribose 1-diphosphate (PRPP) to UMP and diphosphate. The protein is Uracil phosphoribosyltransferase of Photobacterium profundum (strain SS9).